The chain runs to 107 residues: Large ribosomal subunit protein bL21c (107 aa).

The protein belongs to the bacterial ribosomal protein bL21 family. In terms of assembly, part of the 50S ribosomal subunit.

Its subcellular location is the plastid. It is found in the chloroplast. In terms of biological role, this protein binds to 23S rRNA. This is Large ribosomal subunit protein bL21c from Cyanidioschyzon merolae (strain NIES-3377 / 10D) (Unicellular red alga).